Consider the following 103-residue polypeptide: Somatostatin-2 (103 aa).

The signal sequence occupies residues 1–21 (MLGSAGTLLLLLLAWGARALS). Positions 22–87 (QPDDNRITTG…VKFPRLSLRE (66 aa)) are excised as a propeptide. Cys-92 and Cys-103 are oxidised to a cystine.

It belongs to the somatostatin family.

It localises to the secreted. In terms of biological role, somatostatin inhibits the release of somatotropin. This is Somatostatin-2 (sst2) from Pelophylax ridibundus (Marsh frog).